The primary structure comprises 394 residues: Elongation factor Tu (394 aa).

The 195-residue stretch at 10–204 (KPHVNVGTIG…HLDSYIPEPE (195 aa)) folds into the tr-type G domain. The segment at 19–26 (GHVDHGKT) is G1. GTP is bound at residue 19-26 (GHVDHGKT). Threonine 26 contributes to the Mg(2+) binding site. The segment at 60 to 64 (GITIN) is G2. Positions 81-84 (DCPG) are G3. Residues 81 to 85 (DCPGH) and 136 to 139 (NKCD) contribute to the GTP site. The tract at residues 136–139 (NKCD) is G4. A G5 region spans residues 174–176 (SAL).

It belongs to the TRAFAC class translation factor GTPase superfamily. Classic translation factor GTPase family. EF-Tu/EF-1A subfamily. In terms of assembly, monomer.

The protein resides in the cytoplasm. The catalysed reaction is GTP + H2O = GDP + phosphate + H(+). GTP hydrolase that promotes the GTP-dependent binding of aminoacyl-tRNA to the A-site of ribosomes during protein biosynthesis. This Haemophilus ducreyi (strain 35000HP / ATCC 700724) protein is Elongation factor Tu.